The chain runs to 139 residues: Basic phospholipase A2 beta-bungarotoxin A2 chain (139 aa).

Positions alanine 1–alanine 9 are cleaved as a signal peptide. Residues alanine 10–phenylalanine 17 constitute a propeptide that is removed on maturation. Ca(2+) contacts are provided by tyrosine 45, glycine 47, and glycine 49. The cysteines at positions 46 and 62 are disulfide-linked. Residue histidine 65 is part of the active site. A Ca(2+)-binding site is contributed by aspartate 66.

This sequence belongs to the phospholipase A2 family. Group I subfamily. D49 sub-subfamily. As to quaternary structure, heterodimer; disulfide-linked. The A chains have phospholipase A2 activity and the B chains show homology with the basic protease inhibitors. Ca(2+) is required as a cofactor. In terms of tissue distribution, expressed by the venom gland.

It localises to the secreted. It catalyses the reaction a 1,2-diacyl-sn-glycero-3-phosphocholine + H2O = a 1-acyl-sn-glycero-3-phosphocholine + a fatty acid + H(+). Functionally, snake venom phospholipase A2 (PLA2) that shows presynaptic neurotoxicity. PLA2 catalyzes the calcium-dependent hydrolysis of the 2-acyl groups in 3-sn-phosphoglycerides. The chain is Basic phospholipase A2 beta-bungarotoxin A2 chain from Bungarus candidus (Malayan krait).